Consider the following 212-residue polypeptide: Adenylate kinase (212 aa).

Position 14-19 (14-19 (GSGKGT)) interacts with ATP. An NMP region spans residues 34–63 (STGDLFRKKISEDSQFAAQIQNYLSSGSYV). AMP is bound by residues Thr-35, Arg-40, 61–63 (SYV), 89–92 (GYPR), and Gln-96. Positions 126–163 (QRLFCQKCQKSYNLLLAKPKNELKCDLDSTDLITRNDD) are LID. Arg-127 provides a ligand contact to ATP. Zn(2+) is bound by residues Cys-130 and Cys-133. ATP is bound at residue 136–137 (SY). Zn(2+)-binding residues include Cys-150 and Asp-153. AMP-binding residues include Arg-160 and Arg-171. Gln-199 lines the ATP pocket.

The protein belongs to the adenylate kinase family. In terms of assembly, monomer.

The protein localises to the cytoplasm. It catalyses the reaction AMP + ATP = 2 ADP. It participates in purine metabolism; AMP biosynthesis via salvage pathway; AMP from ADP: step 1/1. Its function is as follows. Catalyzes the reversible transfer of the terminal phosphate group between ATP and AMP. Plays an important role in cellular energy homeostasis and in adenine nucleotide metabolism. The protein is Adenylate kinase of Mesomycoplasma hyopneumoniae (strain J / ATCC 25934 / NCTC 10110) (Mycoplasma hyopneumoniae).